A 417-amino-acid polypeptide reads, in one-letter code: Serine hydroxymethyltransferase 1 (417 aa).

(6S)-5,6,7,8-tetrahydrofolate-binding positions include L121 and 125–127; that span reads GHL. K229 bears the N6-(pyridoxal phosphate)lysine mark. 354-356 lines the (6S)-5,6,7,8-tetrahydrofolate pocket; that stretch reads SPF.

The protein belongs to the SHMT family. As to quaternary structure, homodimer. Pyridoxal 5'-phosphate is required as a cofactor.

The protein localises to the cytoplasm. The catalysed reaction is (6R)-5,10-methylene-5,6,7,8-tetrahydrofolate + glycine + H2O = (6S)-5,6,7,8-tetrahydrofolate + L-serine. It participates in one-carbon metabolism; tetrahydrofolate interconversion. Its pathway is amino-acid biosynthesis; glycine biosynthesis; glycine from L-serine: step 1/1. In terms of biological role, catalyzes the reversible interconversion of serine and glycine with tetrahydrofolate (THF) serving as the one-carbon carrier. This reaction serves as the major source of one-carbon groups required for the biosynthesis of purines, thymidylate, methionine, and other important biomolecules. Also exhibits THF-independent aldolase activity toward beta-hydroxyamino acids, producing glycine and aldehydes, via a retro-aldol mechanism. This chain is Serine hydroxymethyltransferase 1, found in Pseudomonas savastanoi pv. phaseolicola (strain 1448A / Race 6) (Pseudomonas syringae pv. phaseolicola (strain 1448A / Race 6)).